The following is a 62-amino-acid chain: MVSTRQCSFCGKDILPGTGLMYVRNDGSLLWFCSSKCRKSMLKLHRDPKKLKWTKSYLGAKP.

Residues Cys7, Cys10, Cys33, and Cys37 each contribute to the Zn(2+) site. The C4-type zinc finger occupies 7–37 (CSFCGKDILPGTGLMYVRNDGSLLWFCSSKC).

The protein belongs to the eukaryotic ribosomal protein eL24 family. In terms of assembly, part of the 50S ribosomal subunit. Forms a cluster with proteins L3 and L14. Zn(2+) serves as cofactor.

Its function is as follows. Binds to the 23S rRNA. The sequence is that of Large ribosomal subunit protein eL24 from Sulfolobus acidocaldarius (strain ATCC 33909 / DSM 639 / JCM 8929 / NBRC 15157 / NCIMB 11770).